The primary structure comprises 158 residues: Cyclic pyranopterin monophosphate synthase (158 aa).

Substrate-binding positions include 74 to 76 and 112 to 113; these read MCH and ME. Asp127 is a catalytic residue.

It belongs to the MoaC family. In terms of assembly, homohexamer; trimer of dimers.

It catalyses the reaction (8S)-3',8-cyclo-7,8-dihydroguanosine 5'-triphosphate = cyclic pyranopterin phosphate + diphosphate. It participates in cofactor biosynthesis; molybdopterin biosynthesis. In terms of biological role, catalyzes the conversion of (8S)-3',8-cyclo-7,8-dihydroguanosine 5'-triphosphate to cyclic pyranopterin monophosphate (cPMP). In Helicobacter pylori (strain Shi470), this protein is Cyclic pyranopterin monophosphate synthase.